The primary structure comprises 653 residues: Large subunit GTPase 1 homolog (653 aa).

Residues 1–31 (MGRRRAPAGGSLGRALMRHQTQRSRSHRHTD) form a disordered region. Basic residues predominate over residues 16–28 (LMRHQTQRSRSHR). 2 positions are modified to phosphoserine: Ser93 and Ser97. Residues 164-445 (WRQLWRVIER…LCDCPGLVMP (282 aa)) enclose the CP-type G domain. Position 212-215 (212-215 (NKAD)) interacts with GTP. The disordered stretch occupies residues 251–358 (DSEEEANKDD…RKTPQKRQLH (108 aa)). Ser252 bears the Phosphoserine mark. The span at 258-288 (KDDRQSNTAEFEHSSFDEAEISHSETEHLPA) shows a compositional bias: basic and acidic residues. Positions 299–333 (TTDEDDSEYEDCPEEEEDDWQTCSEEDGPEEEDCG) are enriched in acidic residues. GTP is bound by residues 394-401 (GYPNVGKS) and 438-441 (DCPG). The tract at residues 630 to 653 (SENGAGKPWKKHGNRNKKEKSCRL) is disordered. Basic residues predominate over residues 637-647 (PWKKHGNRNKK).

The protein belongs to the TRAFAC class YlqF/YawG GTPase family. LSG1 subfamily.

It localises to the cytoplasm. Its subcellular location is the endoplasmic reticulum. It is found in the nucleus. The protein localises to the cajal body. It carries out the reaction GTP + H2O = GDP + phosphate + H(+). Functionally, functions as a GTPase. May act by mediating the release of NMD3 from the 60S ribosomal subunit after export into the cytoplasm during the 60S ribosomal subunit maturation. This Macaca fascicularis (Crab-eating macaque) protein is Large subunit GTPase 1 homolog.